Here is a 384-residue protein sequence, read N- to C-terminus: Helix-loop-helix protein delilah (384 aa).

Disordered regions lie at residues 1 to 101 (MKSN…TANA) and 187 to 227 (EEAE…KIVP). Positions 75–86 (KSRKNAPTKSKT) are enriched in basic residues. Positions 94–153 (YRRKTANARERTRMREINTAFETLRHCVPEAIKGEDAANTNEKLTKITTLRLAMKYITML) constitute a bHLH domain. Residues 209 to 224 (KKSSAASKRQSQKQAK) are compositionally biased toward low complexity.

As to quaternary structure, efficient DNA binding requires dimerization with another bHLH protein, possibly with da. In terms of tissue distribution, expressed almost exclusively in the attachments sites of the somatic muscles to tendon cells in the epidermis.

The protein resides in the nucleus. Functionally, probably plays an important role in the differentiation of epidermal cells into the tendon cells that form the attachment sites for all muscles. This Drosophila melanogaster (Fruit fly) protein is Helix-loop-helix protein delilah (tx).